The chain runs to 206 residues: Ribosomal RNA small subunit methyltransferase G (206 aa).

S-adenosyl-L-methionine is bound by residues Gly71, Phe76, 125–126 (IE), and Arg139.

The protein belongs to the methyltransferase superfamily. RNA methyltransferase RsmG family.

It is found in the cytoplasm. It carries out the reaction guanosine(527) in 16S rRNA + S-adenosyl-L-methionine = N(7)-methylguanosine(527) in 16S rRNA + S-adenosyl-L-homocysteine. Its function is as follows. Specifically methylates the N7 position of guanine in position 527 of 16S rRNA. This chain is Ribosomal RNA small subunit methyltransferase G, found in Cereibacter sphaeroides (strain ATCC 17023 / DSM 158 / JCM 6121 / CCUG 31486 / LMG 2827 / NBRC 12203 / NCIMB 8253 / ATH 2.4.1.) (Rhodobacter sphaeroides).